A 506-amino-acid polypeptide reads, in one-letter code: Histidine ammonia-lyase (506 aa).

Positions 141–143 form a cross-link, 5-imidazolinone (Ala-Gly); sequence ASG. Position 142 is a 2,3-didehydroalanine (Ser) (Ser142).

The protein belongs to the PAL/histidase family. Contains an active site 4-methylidene-imidazol-5-one (MIO), which is formed autocatalytically by cyclization and dehydration of residues Ala-Ser-Gly.

The protein resides in the cytoplasm. It catalyses the reaction L-histidine = trans-urocanate + NH4(+). It participates in amino-acid degradation; L-histidine degradation into L-glutamate; N-formimidoyl-L-glutamate from L-histidine: step 1/3. This Burkholderia multivorans (strain ATCC 17616 / 249) protein is Histidine ammonia-lyase.